The sequence spans 425 residues: Putative dipeptidase MGYG_00085 (425 aa).

The N-terminal stretch at 1 to 31 (MAPERRSRLSETAGLFVSLLALTSIVPVQAV) is a signal peptide. Residues histidine 56, aspartate 58, and glutamate 168 each contribute to the Zn(2+) site. Cysteine 107 and cysteine 197 are disulfide-bonded. Residue histidine 195 coordinates substrate. The Zn(2+) site is built by histidine 239 and histidine 260. The substrate site is built by arginine 271 and aspartate 331. Residue asparagine 403 is glycosylated (N-linked (GlcNAc...) asparagine).

The protein belongs to the metallo-dependent hydrolases superfamily. Peptidase M19 family. It depends on Zn(2+) as a cofactor.

The enzyme catalyses an L-aminoacyl-L-amino acid + H2O = 2 an L-alpha-amino acid. Its function is as follows. Hydrolyzes a wide range of dipeptides. This Arthroderma gypseum (strain ATCC MYA-4604 / CBS 118893) (Microsporum gypseum) protein is Putative dipeptidase MGYG_00085.